Consider the following 201-residue polypeptide: Probable quinol oxidase subunit 3 (201 aa).

The next 5 membrane-spanning stretches (helical) occupy residues Leu20 to Leu40, Leu62 to Tyr82, Leu91 to Ile111, Phe133 to Cys153, and Phe180 to Ser200.

It belongs to the cytochrome c oxidase subunit 3 family.

The protein resides in the cell membrane. It carries out the reaction 2 a quinol + O2 = 2 a quinone + 2 H2O. Its function is as follows. Catalyzes quinol oxidation with the concomitant reduction of oxygen to water. The protein is Probable quinol oxidase subunit 3 (qoxC) of Staphylococcus saprophyticus subsp. saprophyticus (strain ATCC 15305 / DSM 20229 / NCIMB 8711 / NCTC 7292 / S-41).